Consider the following 507-residue polypeptide: Histidine ammonia-lyase (507 aa).

The 5-imidazolinone (Ser-Gly) cross-link spans 143–145 (SSG). Position 144 is a 2,3-didehydroalanine (Ser) (Ser-144).

It belongs to the PAL/histidase family. Post-translationally, contains an active site 4-methylidene-imidazol-5-one (MIO), which is formed autocatalytically by cyclization and dehydration of residues Ser-Ser-Gly.

It localises to the cytoplasm. It carries out the reaction L-histidine = trans-urocanate + NH4(+). It functions in the pathway amino-acid degradation; L-histidine degradation into L-glutamate; N-formimidoyl-L-glutamate from L-histidine: step 1/3. The sequence is that of Histidine ammonia-lyase from Alkaliphilus metalliredigens (strain QYMF).